Consider the following 494-residue polypeptide: tRNA-2-methylthio-N(6)-dimethylallyladenosine synthase (494 aa).

The MTTase N-terminal domain occupies 12-131; it reads PTYRVVTYGC…LPVLLKRARH (120 aa). 6 residues coordinate [4Fe-4S] cluster: Cys-21, Cys-60, Cys-94, Cys-168, Cys-172, and Cys-175. Positions 154-385 constitute a Radical SAM core domain; sequence RDSAYSAWVS…ELVDDIAWQE (232 aa). The TRAM domain occupies 387-457; the sequence is KAQVGRAVEV…PHHLVADGGL (71 aa).

It belongs to the methylthiotransferase family. MiaB subfamily. In terms of assembly, monomer. The cofactor is [4Fe-4S] cluster.

It is found in the cytoplasm. The enzyme catalyses N(6)-dimethylallyladenosine(37) in tRNA + (sulfur carrier)-SH + AH2 + 2 S-adenosyl-L-methionine = 2-methylsulfanyl-N(6)-dimethylallyladenosine(37) in tRNA + (sulfur carrier)-H + 5'-deoxyadenosine + L-methionine + A + S-adenosyl-L-homocysteine + 2 H(+). Functionally, catalyzes the methylthiolation of N6-(dimethylallyl)adenosine (i(6)A), leading to the formation of 2-methylthio-N6-(dimethylallyl)adenosine (ms(2)i(6)A) at position 37 in tRNAs that read codons beginning with uridine. The sequence is that of tRNA-2-methylthio-N(6)-dimethylallyladenosine synthase from Cutibacterium acnes (strain DSM 16379 / KPA171202) (Propionibacterium acnes).